Consider the following 159-residue polypeptide: UPF0587 protein v1g245604 (159 aa).

4 residues coordinate Zn(2+): cysteine 33, cysteine 36, cysteine 67, and cysteine 70.

The protein belongs to the UPF0587 family.

The protein is UPF0587 protein v1g245604 of Nematostella vectensis (Starlet sea anemone).